Reading from the N-terminus, the 345-residue chain is Methylthioribose-1-phosphate isomerase (345 aa).

Substrate is bound by residues 47-49 (RGA), Arg90, and Gln199. The active-site Proton donor is the Asp240. A substrate-binding site is contributed by 250-251 (NK).

This sequence belongs to the eIF-2B alpha/beta/delta subunits family. MtnA subfamily.

It carries out the reaction 5-(methylsulfanyl)-alpha-D-ribose 1-phosphate = 5-(methylsulfanyl)-D-ribulose 1-phosphate. It participates in amino-acid biosynthesis; L-methionine biosynthesis via salvage pathway; L-methionine from S-methyl-5-thio-alpha-D-ribose 1-phosphate: step 1/6. In terms of biological role, catalyzes the interconversion of methylthioribose-1-phosphate (MTR-1-P) into methylthioribulose-1-phosphate (MTRu-1-P). In Crocosphaera subtropica (strain ATCC 51142 / BH68) (Cyanothece sp. (strain ATCC 51142)), this protein is Methylthioribose-1-phosphate isomerase.